The following is a 374-amino-acid chain: Type IV pilus assembly protein PilC (374 aa).

Transmembrane regions (helical) follow at residues 138-158 (AMTY…ILLI), 187-207 (EFLQ…GFTF), and 347-367 (IMAV…LPIF).

Belongs to the GSP F family. As to quaternary structure, homotetramer. Interacts with PilB.

The protein resides in the cell inner membrane. Functionally, essential inner membrane component of the type IV pilus (T4P) that plays a role in surface and host cell adhesion, colonization, biofilm maturation, virulence, and twitching, a form of surface-associated motility facilitated by cycles of extension, adhesion, and retraction of T4P fibers. Controls both pilus assembly and disassembly and plays an important role in PilB localization to the complex and ATPase activity. In Pseudomonas aeruginosa (strain ATCC 15692 / DSM 22644 / CIP 104116 / JCM 14847 / LMG 12228 / 1C / PRS 101 / PAO1), this protein is Type IV pilus assembly protein PilC (pilC).